The following is a 456-amino-acid chain: MSAAASPRSLTLIGAGLAGCLLAILLSRRGWQITLYERRGDPRIKGYESGRSINLALAERGRHALRQACAEDAVMAKAVMMRGRMIHPVSGEPQLQRYGRDDSEVIWSIHRAALNVTLLDLAEQAGARVHFYRRLHTVDFDAGYARFIDDRDDQPHEIHFQALVGSDGAGSALRAAMQRKAPVGEHIAFLDHSYKELEIPPRADGGFRIERNALHIWPRGRYMCIALPNDGGTFTVTLFLPNEGMPSFATTRSGDEALALFARDFPDALPLIPQLKEHWEEHPPGLLGTLTRERWHLDGRAVLLGDAAHAMVPFHGQGMNCAFEDCVALAEQLDAHSDLSEAFAAFEAARRDDAAAIQQMALENYLEMRDRVGDAQFLLQRALEQQLQARWPTRFVPHYTMVTFLRTRYAIALARSEIQREILLEATHGHTDLSRIDWVALETVVHARLEPLEGAH.

It belongs to the aromatic-ring hydroxylase family. KMO subfamily. FAD serves as cofactor.

It catalyses the reaction L-kynurenine + NADPH + O2 + H(+) = 3-hydroxy-L-kynurenine + NADP(+) + H2O. Its pathway is cofactor biosynthesis; NAD(+) biosynthesis; quinolinate from L-kynurenine: step 1/3. Its function is as follows. Catalyzes the hydroxylation of L-kynurenine (L-Kyn) to form 3-hydroxy-L-kynurenine (L-3OHKyn). Required for synthesis of quinolinic acid. The chain is Kynurenine 3-monooxygenase from Xanthomonas campestris pv. campestris (strain B100).